A 2162-amino-acid polypeptide reads, in one-letter code: Calpain-type cysteine protease ADL1 (2162 aa).

Positions 1–33 are cleaved as a signal peptide; sequence MEEEEHRGVVLVCSICGFLFAVLGPLSFWILWA. At 34-70 the chain is on the extracellular side; that stretch reads VNWRPWRLYSWIYARKWPAYVQGPQLSTLCSFFTLFA. The chain crosses the membrane as a helical span at residues 71–91; that stretch reads WLVVVSPITVLLVWGGILIAL. Residues 92–95 lie on the Cytoplasmic side of the membrane; that stretch reads LERN. A helical transmembrane segment spans residues 96 to 116; the sequence is IIGLAVIMVGVALLLSFYSIM. The Extracellular portion of the chain corresponds to 117-127; it reads LWWRTQWQSSK. The helical transmembrane segment at 128-148 threads the bilayer; the sequence is AVAYLLLLAVGLLCAYEFCAV. Over 149 to 164 the chain is Cytoplasmic; sequence YVTTGASASELNSPSG. A helical membrane pass occupies residues 165 to 185; the sequence is FFFGVSAISLAINMLFISKIL. Over 186 to 236 the chain is Extracellular; it reads FNGSGFDVDEYVRRLYKFAYSDCVEVAPVSCSPDPPDPSELYMTKSSRVLH. The helical transmembrane segment at 237–257 threads the bilayer; that stretch reads LGLLYLCSLMVLVVYSILYGL. Topologically, residues 258-264 are cytoplasmic; it reads TSKEARW. A helical transmembrane segment spans residues 265 to 285; that stretch reads LGALTSVAVVILDWNLGLCSF. Topologically, residues 286-294 are extracellular; the sequence is RFELLKSRM. The helical transmembrane segment at 295 to 315 threads the bilayer; the sequence is IALFVAGTSRVFLICFGVHYW. Residues 316–320 are Cytoplasmic-facing; sequence YLGHC. A helical membrane pass occupies residues 321 to 341; the sequence is ISYAFVASVLLAAAVSCWLSI. Residues 342–626 are Extracellular-facing; the sequence is SNPSVARIDA…LMFHQVAGSP (285 aa). The disordered stretch occupies residues 366-403; sequence KGQTSSSNSSDGCGSSVKRSSGSVEAGPHGNATDSMYR. Residues 370 to 381 are compositionally biased toward low complexity; it reads SSSNSSDGCGSS. Residues 627-647 traverse the membrane as a helical segment; that stretch reads IRAFVVFTLIFIIETVTVAVH. Over 648–663 the chain is Cytoplasmic; sequence RPKPIKVINATHEQFE. The chain crosses the membrane as a helical span at residues 664–684; it reads FGFSILLLSPVVCSIMAFIWS. Residues 685–697 are Extracellular-facing; the sequence is LCAEEMTMTSKPR. A helical transmembrane segment spans residues 698–718; that stretch reads KYGFIAWLLSTCVGLLLSFLS. Residues 719 to 722 are Cytoplasmic-facing; sequence KSSV. A helical transmembrane segment spans residues 723-743; that stretch reads ILGLSLTVPLMVACLSFAIPI. Topologically, residues 744-773 are extracellular; the sequence is WMRNGYRFWIPGGELDSRENIRQAPGKKER. The chain crosses the membrane as a helical span at residues 774 to 794; sequence ALFAISITVFTASVIGLGAIV. Topologically, residues 795 to 825 are cytoplasmic; that stretch reads SAKPLDALGYKGWDADKKSFYSPYATSMYLG. A helical transmembrane segment spans residues 826–846; that stretch reads WALSSTIAVLATGVIPIVAWF. Residues 847–856 lie on the Extracellular side of the membrane; it reads ATYRFSPSSA. Residues 857-877 form a helical membrane-spanning segment; the sequence is ICVGLFATVLVSFCGVSYWGV. Residues 878 to 890 are Cytoplasmic-facing; the sequence is VNSRQDGVPLKAD. A helical transmembrane segment spans residues 891-911; it reads FLAALLPLLCIPAVFSLFTGM. Over 912–924 the chain is Extracellular; that stretch reads YKWKDDDWKISRG. The helical transmembrane segment at 925 to 945 threads the bilayer; it reads VYLFVGMGVLLLLGAISAVIV. Topologically, residues 946–949 are cytoplasmic; that stretch reads TIRP. Residues 950 to 970 form a helical membrane-spanning segment; that stretch reads WTVGVACLLVILFLVFAIGVI. The Extracellular segment spans residues 971–984; it reads HYWTSNNFYLTRTQ. The helical transmembrane segment at 985 to 1005 threads the bilayer; it reads MLLVCSLAFLLALAAFLMGLF. Residues 1006–1019 lie on the Cytoplasmic side of the membrane; it reads QEKPFVGASIGYFS. The helical transmembrane segment at 1020–1040 threads the bilayer; the sequence is FLFLLTGRALTVLLSPPIVVY. Residues 1041-1063 are Extracellular-facing; it reads SPRVLPVYVYDAHADSAKNVSYA. A helical membrane pass occupies residues 1064–1084; the sequence is FLILYGIALATEVWGVIASLI. Topologically, residues 1085-2162 are cytoplasmic; the sequence is LNPPFIGAAI…TKAPIKLEAV (1078 aa). Residues Ser1372 and Ser1377 each carry the phosphoserine modification. One can recognise a Calpain catalytic 1 domain in the interval 1418–1611; sequence TGRHCGEIDL…ICSAEYGLFD (194 aa). Ser1668 carries the phosphoserine modification. Residues 1706 to 2008 enclose the Calpain catalytic 2 domain; the sequence is NFTDQEFPPD…FRSIYVCRVY (303 aa). Residues Cys1772, His1930, and Asn1950 contribute to the active site.

The protein belongs to the peptidase C2 family. Autocatalytic proteolytic cleavage leading to the production of mainly cytoplasmic localized subproducts of about 85 and 120 kDa. As to expression, ubiquitously expressed with higher levels in embryos, vasculatures, leaf primordia, leaf margins, and shoot apical meristem (SAM).

It localises to the endoplasmic reticulum membrane. Its subcellular location is the cytoplasm. The protein localises to the cell membrane. The protein resides in the endosome membrane. Essential protease involved in epiderm development. Required for aleurone cell development in the endosperm probably by maintaining and restricting the aleurone and embryonic epidermal L1 cell-layer fates as well as meristems organization. Involved in the maintenance of adaxial/abaxial axis information in developing leaves, probably by regulating cell proliferation and expansion. Does not need calcium ions to be active. This chain is Calpain-type cysteine protease ADL1 (ADL1), found in Oryza sativa subsp. japonica (Rice).